Reading from the N-terminus, the 207-residue chain is 5-nitrosalicylic acid 1,2-dioxygenase (207 aa).

One can recognise a Cupin type-2 domain in the interval 85 to 151; it reads QLIHPGEEVT…GDKDTLMYVI (67 aa).

It carries out the reaction 5-nitrosalicylate + O2 = 2-oxo-3-(5-oxofuran-2-ylidene)propanoate + nitrite + H(+). Its function is as follows. Dioxygenase that catalyzes the cleavage of the aromatic ring of 5-nitrosalicylate (5NSA) without prior removal of the nitro group in biodegradation of 5-nitroanthranilate. This chain is 5-nitrosalicylic acid 1,2-dioxygenase (naaB), found in Bradyrhizobium sp.